Consider the following 205-residue polypeptide: Small ribosomal subunit protein uS4 (205 aa).

The S4 RNA-binding domain maps to 95–158; the sequence is SRLDNIVYRM…TKSPLVKNFI (64 aa).

This sequence belongs to the universal ribosomal protein uS4 family. Part of the 30S ribosomal subunit. Contacts protein S5. The interaction surface between S4 and S5 is involved in control of translational fidelity.

Functionally, one of the primary rRNA binding proteins, it binds directly to 16S rRNA where it nucleates assembly of the body of the 30S subunit. In terms of biological role, with S5 and S12 plays an important role in translational accuracy. This chain is Small ribosomal subunit protein uS4, found in Mycoplasma genitalium (strain ATCC 33530 / DSM 19775 / NCTC 10195 / G37) (Mycoplasmoides genitalium).